The primary structure comprises 185 residues: Ribosome-recycling factor (185 aa).

The disordered stretch occupies residues 137 to 162; sequence DSIDKMVKDGEVGEDEGRRAEKELDD.

This sequence belongs to the RRF family.

It is found in the cytoplasm. Its function is as follows. Responsible for the release of ribosomes from messenger RNA at the termination of protein biosynthesis. May increase the efficiency of translation by recycling ribosomes from one round of translation to another. This Streptomyces coelicolor (strain ATCC BAA-471 / A3(2) / M145) protein is Ribosome-recycling factor.